The chain runs to 299 residues: ATP phosphoribosyltransferase (299 aa).

Belongs to the ATP phosphoribosyltransferase family. Long subfamily. Requires Mg(2+) as cofactor.

The protein resides in the cytoplasm. It catalyses the reaction 1-(5-phospho-beta-D-ribosyl)-ATP + diphosphate = 5-phospho-alpha-D-ribose 1-diphosphate + ATP. Its pathway is amino-acid biosynthesis; L-histidine biosynthesis; L-histidine from 5-phospho-alpha-D-ribose 1-diphosphate: step 1/9. Feedback inhibited by histidine. Functionally, catalyzes the condensation of ATP and 5-phosphoribose 1-diphosphate to form N'-(5'-phosphoribosyl)-ATP (PR-ATP). Has a crucial role in the pathway because the rate of histidine biosynthesis seems to be controlled primarily by regulation of HisG enzymatic activity. In Baumannia cicadellinicola subsp. Homalodisca coagulata, this protein is ATP phosphoribosyltransferase.